The following is a 741-amino-acid chain: Exostosin-1b (741 aa).

The Cytoplasmic segment spans residues 1-7 (MQAKKRY). The helical; Signal-anchor for type II membrane protein transmembrane segment at 8 to 28 (LISLLTGAFLVLLIYLGGGGV) threads the bilayer. At 29-741 (PGPAAPGSRS…RKKYREIERL (713 aa)) the chain is on the lumenal side. Residues asparagine 84 and asparagine 325 are each glycosylated (N-linked (GlcNAc...) asparagine). Arginine 435, arginine 544, aspartate 560, glutamate 561, aspartate 562, glutamate 648, aspartate 649, and arginine 696 together coordinate UDP-N-acetyl-alpha-D-glucosamine. Aspartate 562 provides a ligand contact to Mn(2+). A disulfide bond links cysteine 647 and cysteine 699. The active site involves aspartate 649.

Belongs to the glycosyltransferase 47 family. Mn(2+) serves as cofactor.

It is found in the endoplasmic reticulum membrane. The enzyme catalyses 3-O-{[(1-&gt;4)-beta-D-GlcA-(1-&gt;4)-alpha-D-GlcNAc](n)-(1-&gt;4)-beta-D-GlcA-(1-&gt;3)-beta-D-Gal-(1-&gt;3)-beta-D-Gal-(1-&gt;4)-beta-D-Xyl}-L-seryl-[protein] + UDP-N-acetyl-alpha-D-glucosamine = 3-O-{alpha-D-GlcNAc-[(1-&gt;4)-beta-D-GlcA-(1-&gt;4)-alpha-D-GlcNAc](n)-(1-&gt;4)-beta-D-GlcA-(1-&gt;3)-beta-D-Gal-(1-&gt;3)-beta-D-Gal-(1-&gt;4)-beta-D-Xyl}-L-seryl-[protein] + UDP + H(+). It catalyses the reaction 3-O-{alpha-D-GlcNAc-[(1-&gt;4)-beta-D-GlcA-(1-&gt;4)-alpha-D-GlcNAc](n)-(1-&gt;4)-beta-D-GlcA-(1-&gt;3)-beta-D-Gal-(1-&gt;3)-beta-D-Gal-(1-&gt;4)-beta-D-Xyl}-L-seryl-[protein] + UDP-alpha-D-glucuronate = 3-O-{[(1-&gt;4)-beta-D-GlcA-(1-&gt;4)-alpha-D-GlcNAc](n+1)-(1-&gt;4)-beta-D-GlcA-(1-&gt;3)-beta-D-Gal-(1-&gt;3)-beta-D-Gal-(1-&gt;4)-beta-D-Xyl}-L-seryl-[protein] + UDP + H(+). The protein operates within protein modification; protein glycosylation. In terms of biological role, glycosyltransferase required for the biosynthesis of heparan-sulfate. This Danio rerio (Zebrafish) protein is Exostosin-1b (ext1b).